Consider the following 188-residue polypeptide: Interferon alpha-2 (188 aa).

The N-terminal stretch at 1–23 (MALTFALLVALLVLSCKSSCSVG) is a signal peptide. Disulfide bonds link Cys24–Cys121 and Cys52–Cys161. O-linked (GalNAc...) threonine glycosylation occurs at Thr129.

It belongs to the alpha/beta interferon family. Interacts with IFNAR2.

The protein resides in the secreted. Functionally, produced by macrophages, IFN-alpha have antiviral activities. This Homo sapiens (Human) protein is Interferon alpha-2 (IFNA2).